The sequence spans 208 residues: Imidazoleglycerol-phosphate dehydratase (208 aa).

It belongs to the imidazoleglycerol-phosphate dehydratase family.

It catalyses the reaction D-erythro-1-(imidazol-4-yl)glycerol 3-phosphate = 3-(imidazol-4-yl)-2-oxopropyl phosphate + H2O. The protein operates within amino-acid biosynthesis; L-histidine biosynthesis; L-histidine from 5-phospho-alpha-D-ribose 1-diphosphate: step 6/9. This Trichoderma harzianum (Hypocrea lixii) protein is Imidazoleglycerol-phosphate dehydratase (his3).